Here is a 78-residue protein sequence, read N- to C-terminus: Putative permease-like protein YdzE (78 aa).

3 helical membrane passes run 2 to 22, 27 to 47, and 49 to 69; these read YLGIVSTACAFLLWNHGLQLL, GGLFFFFQPLVGTLLGWILLG, and QIGGTFWIGSFLILSGVLLVI. The 69-residue stretch at 2 to 70 folds into the EamA domain; that stretch reads YLGIVSTACA…ILSGVLLVIK (69 aa).

This sequence belongs to the EamA transporter family.

The protein localises to the cell membrane. This chain is Putative permease-like protein YdzE (ydzE), found in Bacillus subtilis (strain 168).